Reading from the N-terminus, the 376-residue chain is Alanine racemase (376 aa).

Lys40 functions as the Proton acceptor; specific for D-alanine in the catalytic mechanism. At Lys40 the chain carries N6-(pyridoxal phosphate)lysine. Arg138 contacts substrate. The active-site Proton acceptor; specific for L-alanine is the Tyr270. Met317 is a binding site for substrate.

It belongs to the alanine racemase family. The cofactor is pyridoxal 5'-phosphate.

It catalyses the reaction L-alanine = D-alanine. It participates in amino-acid biosynthesis; D-alanine biosynthesis; D-alanine from L-alanine: step 1/1. Functionally, catalyzes the interconversion of L-alanine and D-alanine. May also act on other amino acids. This chain is Alanine racemase (alr), found in Lactobacillus acidophilus (strain ATCC 700396 / NCK56 / N2 / NCFM).